The chain runs to 772 residues: Delta-like protein A (772 aa).

Residues 1-20 (MGRHLLLLLFSILYMLLCQA) form the signal peptide. Over 21–536 (SSSGVFELKL…SQIASDVPWT (516 aa)) the chain is Extracellular. Residues 179–223 (FVCDEHYYGEGCSVFCRPRDDAFGHFTCGERGEIICDAGWKGQYC) form the DSL domain. Intrachain disulfides connect cysteine 181/cysteine 190, cysteine 194/cysteine 206, cysteine 214/cysteine 223, cysteine 228/cysteine 239, cysteine 232/cysteine 245, cysteine 259/cysteine 270, cysteine 265/cysteine 276, cysteine 278/cysteine 287, cysteine 294/cysteine 306, cysteine 300/cysteine 316, cysteine 318/cysteine 327, cysteine 334/cysteine 345, cysteine 339/cysteine 354, cysteine 356/cysteine 365, cysteine 372/cysteine 383, cysteine 377/cysteine 393, cysteine 395/cysteine 404, cysteine 411/cysteine 422, cysteine 416/cysteine 431, cysteine 433/cysteine 442, cysteine 449/cysteine 460, cysteine 454/cysteine 469, cysteine 471/cysteine 480, cysteine 487/cysteine 498, cysteine 492/cysteine 507, and cysteine 509/cysteine 518. EGF-like domains are found at residues 225–257 (EPIC…RYCD), 257–288 (DECI…LFCN), and 290–328 (DLNY…ASCE). The region spanning 330–366 (EVNECTGNPCRNGGSCTDMENTYSCTCPPGFYGKNCE) is the EGF-like 4; calcium-binding domain. EGF-like domains lie at 368-405 (SAMT…FNCE), 407-443 (KIDH…MNCD), 445-481 (AGDE…RNCS), and 483-519 (PVSR…RNCQ). Asparagine 479 carries an N-linked (GlcNAc...) asparagine glycan. Residues 537–557 (AVGSGVLLVLLLVVACAVVVV) traverse the membrane as a helical segment. Over 558–772 (CVRSKVQQRR…KDECVIATEV (215 aa)) the chain is Cytoplasmic. The interval 688 to 722 (EEKRRKRLKSDASEKSKYSESRYSESKYSESKYSE) is disordered. The span at 696–722 (KSDASEKSKYSESRYSESKYSESKYSE) shows a compositional bias: basic and acidic residues.

In terms of assembly, interacts with mib. In terms of processing, ubiquitinated by mib, leading to its endocytosis and subsequent degradation. Ubiquitinated by the ECS(ASB11) complex, leading to its degradation by the proteasome. In terms of tissue distribution, expressed in nervous system. In the developing nervous system, it is expressed in overlapping regions with deltaB (dlb) and deltaD (dld); in the neural plate, dla is expressed in patches of contiguous cells with dld, while dlb is confined to scattered cells within those patches that will differentiate as neurons. In 24 hours embryos, expressed in the hindbrain in stripes adjacent to rhombomere boundaries, but not in the actual boundary cells. During gastrulation and tail formation, expressed in embryonic midline cells. Expressed in hair cells of inner ear.

Its subcellular location is the membrane. In terms of biological role, acts as a ligand for Notch receptors and is involved in primary neurogenesis. Can activate Notch receptors, thereby playing a key role in lateral inhibition, a process that prevents the immediate neighbors of each nascent neural cell from simultaneously embarking on neural differentiation. Required for boundary formation during segmentation of the hindbrain. Required for midline cell fate specification prior to germ layer formation; regulates specification of floorplate, notochord and hypochord. In inner ear, it prevents adjacent cells from adopting the same cell fate. Plays a role in angiogenesis. This is Delta-like protein A (dla) from Danio rerio (Zebrafish).